The sequence spans 119 residues: NADH-quinone oxidoreductase subunit A (119 aa).

A run of 3 helical transmembrane segments spans residues 7-27, 63-83, and 88-108; these read YPVLLFLLVGTGLGIALVSIG, LVAILFIIFDLETAFLFPWGV, and IGWPGFSAMMIFLLEFLLGFA.

Belongs to the complex I subunit 3 family. In terms of assembly, NDH-1 is composed of 14 different subunits. Subunits NuoA, H, J, K, L, M, N constitute the membrane sector of the complex.

It localises to the cell inner membrane. It catalyses the reaction a quinone + NADH + 5 H(+)(in) = a quinol + NAD(+) + 4 H(+)(out). Its function is as follows. NDH-1 shuttles electrons from NADH, via FMN and iron-sulfur (Fe-S) centers, to quinones in the respiratory chain. The immediate electron acceptor for the enzyme in this species is believed to be ubiquinone. Couples the redox reaction to proton translocation (for every two electrons transferred, four hydrogen ions are translocated across the cytoplasmic membrane), and thus conserves the redox energy in a proton gradient. In Burkholderia vietnamiensis (strain G4 / LMG 22486) (Burkholderia cepacia (strain R1808)), this protein is NADH-quinone oxidoreductase subunit A.